An 893-amino-acid polypeptide reads, in one-letter code: Protein bride of sevenless (893 aa).

The signal sequence occupies residues 1–30 (MSGLQLIWKSPTQLVLFVLLITISCIDLCH). The Extracellular portion of the chain corresponds to 32–530 (VGAATPTKKS…RIKLDTWVAT (499 aa)). Disordered stretches follow at residues 36-66 (TPTK…NEGS) and 82-102 (GTAS…SSTT). Residues 50–66 (QPVSSTTTAIPTTNEGS) show a composition bias toward polar residues. N-linked (GlcNAc...) asparagine glycosylation is found at asparagine 183, asparagine 307, asparagine 328, asparagine 471, and asparagine 482. Helical transmembrane passes span 531–551 (GLTA…FIVV), 563–583 (PVTS…FVPF), 607–627 (LCGV…SLLL), 630–650 (AVML…NGYI), 653–673 (IICV…LVVM), 692–712 (WGLL…VPFI), 722–742 (GILI…WIAL), and 752–772 (AAIP…ILIP). Topologically, residues 773–893 (RTFLIVRGIE…SPDHSKITRF (121 aa)) are cytoplasmic. Positions 858–893 (ANINPQRPPPHPQQSPSRSSVCSLPPSPDHSKITRF) are disordered.

It belongs to the G-protein coupled receptor 3 family.

It is found in the cell membrane. Its function is as follows. Acts as a ligand for sevenless tyrosine-kinase receptor during eye development. In Drosophila virilis (Fruit fly), this protein is Protein bride of sevenless (boss).